The chain runs to 342 residues: Uroporphyrinogen decarboxylase (342 aa).

Substrate-binding positions include 24-28, aspartate 74, tyrosine 149, serine 204, and histidine 319; that span reads RQAGR.

It belongs to the uroporphyrinogen decarboxylase family. As to quaternary structure, homodimer.

It is found in the cytoplasm. It catalyses the reaction uroporphyrinogen III + 4 H(+) = coproporphyrinogen III + 4 CO2. The protein operates within porphyrin-containing compound metabolism; protoporphyrin-IX biosynthesis; coproporphyrinogen-III from 5-aminolevulinate: step 4/4. Its function is as follows. Catalyzes the decarboxylation of four acetate groups of uroporphyrinogen-III to yield coproporphyrinogen-III. In Chelativorans sp. (strain BNC1), this protein is Uroporphyrinogen decarboxylase.